Consider the following 455-residue polypeptide: Guanine/hypoxanthine permease GhxQ (455 aa).

The Cytoplasmic portion of the chain corresponds to 1–31 (MSGDILQTPDAPKPQGALDNYFKITARGSTV). The chain crosses the membrane as a helical span at residues 32-55 (RQEVLAGLTTFLAMVYSVIVVPGM). The Periplasmic segment spans residues 56–65 (LGKAGFPPAA). A helical membrane pass occupies residues 66 to 84 (VFVATCLVAGFGSLLMGLW). Residues 85–86 (AN) lie on the Cytoplasmic side of the membrane. Residues 87–103 (LPMAIGCAISLTAFTAF) traverse the membrane as a discontinuously helical segment. The Periplasmic segment spans residues 104-115 (SLVLGQQISVPV). Residues 116–135 (ALGAVFLMGVIFTAISVTGV) traverse the membrane as a helical segment. Residues 136–147 (RTWILRNLPMGI) lie on the Cytoplasmic side of the membrane. The helical transmembrane segment at 148-168 (AHGTGIGIGLFLLLIAANGVG) threads the bilayer. Residues 169–186 (MVIKNPIEGLPVALGAFT) lie on the Periplasmic side of the membrane. The helical transmembrane segment at 187–204 (SFPVMMSLLGLAVIFGLE) threads the bilayer. At 205–208 (KCRV) the chain is on the cytoplasmic side. Residues 209 to 228 (PGGILLVIIAISIIGLIFDP) traverse the membrane as a helical segment. Over 229–260 (AVKYHGLVAMPSLTGEDGKSLIFSLDIMGALQ) the chain is Periplasmic. A helical membrane pass occupies residues 261-289 (PTVLPSVLALVMTAVFDATGTIRAVAGQA). The Cytoplasmic segment spans residues 290–302 (NLLDKDNQIINGG). Residues 303 to 318 (KALTSDSVSSIFSGLV) form a helical membrane-spanning segment. The Periplasmic segment spans residues 319 to 320 (GA). The chain crosses the membrane as a discontinuously helical span at residues 321–336 (APAAVYIESAAGTAAG). Over 337–340 (GKTG) the chain is Cytoplasmic. A helical transmembrane segment spans residues 341–355 (LTATVVGALFLLILF). Residues 356–366 (LSPLSFLIPGY) lie on the Periplasmic side of the membrane. A helical membrane pass occupies residues 367–386 (ATAPALMYVGLLMLSNVSKL). Residues 387–391 (DFNDF) lie on the Cytoplasmic side of the membrane. An intramembrane region (discontinuously helical) is located at residues 392–427 (IDAMAGLVCAVFIVLTCNIVTGIMLGFVTLVVGRVF). Over 428–455 (AREWQKLNIGTVIITAALVAFYAGGWAI) the chain is Cytoplasmic.

This sequence belongs to the nucleobase:cation symporter-2 (NCS2) (TC 2.A.40) family. Azg-like subfamily.

The protein localises to the cell membrane. In terms of biological role, high-affinity transporter for guanine and hypoxanthine. The chain is Guanine/hypoxanthine permease GhxQ (ghxQ) from Escherichia coli (strain K12).